Reading from the N-terminus, the 124-residue chain is Small ribosomal subunit protein uS12c (124 aa).

Belongs to the universal ribosomal protein uS12 family. Part of the 30S ribosomal subunit.

It localises to the plastid. With S4 and S5 plays an important role in translational accuracy. Located at the interface of the 30S and 50S subunits. The polypeptide is Small ribosomal subunit protein uS12c (rps12) (Helicosporidium sp. subsp. Simulium jonesii (Green alga)).